The chain runs to 177 residues: Small ribosomal subunit protein mS23 (177 aa).

Residue Ala2 is modified to N-acetylalanine. Residue Lys83 is modified to N6-succinyllysine. N6-acetyllysine is present on Lys102. The segment at 145–177 (LQASSEGHEPQEDDDLAQRGQVKQEPETAPSPP) is disordered.

Belongs to the mitochondrion-specific ribosomal protein mS23 family. Component of the mitochondrial ribosome small subunit (28S) which comprises a 12S rRNA and about 30 distinct proteins.

Its subcellular location is the mitochondrion. The chain is Small ribosomal subunit protein mS23 from Mus musculus (Mouse).